The following is a 325-amino-acid chain: Pyruvate dehydrogenase E1 component subunit beta (325 aa).

Glu59 is a binding site for thiamine diphosphate.

In terms of assembly, heterodimer of an alpha and a beta chain. Requires thiamine diphosphate as cofactor.

It carries out the reaction N(6)-[(R)-lipoyl]-L-lysyl-[protein] + pyruvate + H(+) = N(6)-[(R)-S(8)-acetyldihydrolipoyl]-L-lysyl-[protein] + CO2. In terms of biological role, the pyruvate dehydrogenase complex catalyzes the overall conversion of pyruvate to acetyl-CoA and CO(2). It contains multiple copies of three enzymatic components: pyruvate dehydrogenase (E1), dihydrolipoamide acetyltransferase (E2) and lipoamide dehydrogenase (E3). In Rickettsia bellii (strain RML369-C), this protein is Pyruvate dehydrogenase E1 component subunit beta (pdhB).